Reading from the N-terminus, the 70-residue chain is Large ribosomal subunit protein bL31 (70 aa).

The Zn(2+) site is built by Cys-16, Cys-18, Cys-37, and Cys-40.

This sequence belongs to the bacterial ribosomal protein bL31 family. Type A subfamily. Part of the 50S ribosomal subunit. Zn(2+) serves as cofactor.

Binds the 23S rRNA. The sequence is that of Large ribosomal subunit protein bL31 from Shewanella denitrificans (strain OS217 / ATCC BAA-1090 / DSM 15013).